A 402-amino-acid chain; its full sequence is CCA-adding enzyme (402 aa).

ATP contacts are provided by G32 and R35. CTP contacts are provided by G32 and R35. 2 residues coordinate Mg(2+): D45 and D47. 5 residues coordinate ATP: R119, D162, R165, R168, and R171. CTP-binding residues include R119, D162, R165, R168, and R171.

The protein belongs to the tRNA nucleotidyltransferase/poly(A) polymerase family. Bacterial CCA-adding enzyme type 3 subfamily. As to quaternary structure, homodimer. Mg(2+) is required as a cofactor.

The enzyme catalyses a tRNA precursor + 2 CTP + ATP = a tRNA with a 3' CCA end + 3 diphosphate. The catalysed reaction is a tRNA with a 3' CCA end + 2 CTP + ATP = a tRNA with a 3' CCACCA end + 3 diphosphate. Functionally, catalyzes the addition and repair of the essential 3'-terminal CCA sequence in tRNAs without using a nucleic acid template. Adds these three nucleotides in the order of C, C, and A to the tRNA nucleotide-73, using CTP and ATP as substrates and producing inorganic pyrophosphate. tRNA 3'-terminal CCA addition is required both for tRNA processing and repair. Also involved in tRNA surveillance by mediating tandem CCA addition to generate a CCACCA at the 3' terminus of unstable tRNAs. While stable tRNAs receive only 3'-terminal CCA, unstable tRNAs are marked with CCACCA and rapidly degraded. This Lactococcus lactis subsp. cremoris (strain MG1363) protein is CCA-adding enzyme.